Here is a 130-residue protein sequence, read N- to C-terminus: Ribosome-binding factor A (130 aa).

It belongs to the RbfA family. Monomer. Binds 30S ribosomal subunits, but not 50S ribosomal subunits or 70S ribosomes.

The protein localises to the cytoplasm. One of several proteins that assist in the late maturation steps of the functional core of the 30S ribosomal subunit. Associates with free 30S ribosomal subunits (but not with 30S subunits that are part of 70S ribosomes or polysomes). Required for efficient processing of 16S rRNA. May interact with the 5'-terminal helix region of 16S rRNA. The chain is Ribosome-binding factor A from Methylibium petroleiphilum (strain ATCC BAA-1232 / LMG 22953 / PM1).